The following is a 315-amino-acid chain: Ribonuclease Z (315 aa).

Zn(2+) is bound by residues histidine 61, histidine 63, aspartate 65, histidine 66, histidine 151, aspartate 219, and histidine 278. Aspartate 65 (proton acceptor) is an active-site residue.

Belongs to the RNase Z family. Homodimer. The cofactor is Zn(2+).

The catalysed reaction is Endonucleolytic cleavage of RNA, removing extra 3' nucleotides from tRNA precursor, generating 3' termini of tRNAs. A 3'-hydroxy group is left at the tRNA terminus and a 5'-phosphoryl group is left at the trailer molecule.. Zinc phosphodiesterase, which displays some tRNA 3'-processing endonuclease activity. Probably involved in tRNA maturation, by removing a 3'-trailer from precursor tRNA. The chain is Ribonuclease Z from Clostridium botulinum (strain Eklund 17B / Type B).